Reading from the N-terminus, the 334-residue chain is Holliday junction branch migration complex subunit RuvB (334 aa).

The tract at residues 4-184 (ADRLISAGVI…FGIVQRLEFY (181 aa)) is large ATPase domain (RuvB-L). Residues Ile23, Arg24, Gly65, Lys68, Thr69, Thr70, 131–133 (EDY), Arg174, Tyr184, and Arg221 each bind ATP. Mg(2+) is bound at residue Thr69. The tract at residues 185–255 (QVADLEHIVS…VAMKALDMLN (71 aa)) is small ATPAse domain (RuvB-S). A head domain (RuvB-H) region spans residues 258 to 334 (AEGFDFMDRK…YKHFGITREE (77 aa)). Arg294, Arg313, and Arg318 together coordinate DNA.

This sequence belongs to the RuvB family. As to quaternary structure, homohexamer. Forms an RuvA(8)-RuvB(12)-Holliday junction (HJ) complex. HJ DNA is sandwiched between 2 RuvA tetramers; dsDNA enters through RuvA and exits via RuvB. An RuvB hexamer assembles on each DNA strand where it exits the tetramer. Each RuvB hexamer is contacted by two RuvA subunits (via domain III) on 2 adjacent RuvB subunits; this complex drives branch migration. In the full resolvosome a probable DNA-RuvA(4)-RuvB(12)-RuvC(2) complex forms which resolves the HJ.

It localises to the cytoplasm. The enzyme catalyses ATP + H2O = ADP + phosphate + H(+). Functionally, the RuvA-RuvB-RuvC complex processes Holliday junction (HJ) DNA during genetic recombination and DNA repair, while the RuvA-RuvB complex plays an important role in the rescue of blocked DNA replication forks via replication fork reversal (RFR). RuvA specifically binds to HJ cruciform DNA, conferring on it an open structure. The RuvB hexamer acts as an ATP-dependent pump, pulling dsDNA into and through the RuvAB complex. RuvB forms 2 homohexamers on either side of HJ DNA bound by 1 or 2 RuvA tetramers; 4 subunits per hexamer contact DNA at a time. Coordinated motions by a converter formed by DNA-disengaged RuvB subunits stimulates ATP hydrolysis and nucleotide exchange. Immobilization of the converter enables RuvB to convert the ATP-contained energy into a lever motion, pulling 2 nucleotides of DNA out of the RuvA tetramer per ATP hydrolyzed, thus driving DNA branch migration. The RuvB motors rotate together with the DNA substrate, which together with the progressing nucleotide cycle form the mechanistic basis for DNA recombination by continuous HJ branch migration. Branch migration allows RuvC to scan DNA until it finds its consensus sequence, where it cleaves and resolves cruciform DNA. The protein is Holliday junction branch migration complex subunit RuvB of Yersinia enterocolitica serotype O:8 / biotype 1B (strain NCTC 13174 / 8081).